The sequence spans 362 residues: Molybdenum import ATP-binding protein ModC (362 aa).

Residues 1-236 (MTASGLYLNL…TQSPTAQGED (236 aa)) enclose the ABC transporter domain. An ATP-binding site is contributed by 36 to 43 (GPSGSGKT). Positions 297–362 (DSTILNKLAA…AQVKSVAIVG (66 aa)) constitute a Mop domain.

This sequence belongs to the ABC transporter superfamily. Molybdate importer (TC 3.A.1.8) family. The complex is composed of two ATP-binding proteins (ModC), two transmembrane proteins (ModB) and a solute-binding protein (ModA).

The protein localises to the cell inner membrane. The enzyme catalyses molybdate(out) + ATP + H2O = molybdate(in) + ADP + phosphate + H(+). In terms of biological role, part of the ABC transporter complex ModABC involved in molybdenum import. Responsible for energy coupling to the transport system. This Saccharophagus degradans (strain 2-40 / ATCC 43961 / DSM 17024) protein is Molybdenum import ATP-binding protein ModC.